The sequence spans 2615 residues: Probable serine/threonine-protein kinase roco7 (2615 aa).

Positions 1–13 are enriched in low complexity; the sequence is MDGYSSLSSSGNS. Disordered stretches follow at residues 1-35, 275-297, 533-623, and 946-998; these read MDGY…NYNQ, STPT…NSNN, QNIN…GGLN, and SSSS…ISEQ. Low complexity-rich tracts occupy residues 533-560, 567-614, and 946-996; these read QNIN…SSRS, NSST…NNNN, and SSSS…SNIS. One can recognise a COR domain in the interval 1441–1631; sequence SVKEAYARNK…LCIWQNGMVL (191 aa). The 268-residue stretch at 1775–2042 folds into the Protein kinase domain; sequence LKFGPQLGSG…ERLSTMQKTF (268 aa). ATP is bound by residues 1781-1789 and lysine 1802; that span reads LGSGSYANV. Aspartate 1899 functions as the Proton acceptor in the catalytic mechanism. Disordered stretches follow at residues 2061–2158 and 2176–2209; these read QINQ…SHSG and GIGS…YESG. 2 stretches are compositionally biased toward low complexity: residues 2073–2158 and 2182–2209; these read SQAA…SHSG and NQHQ…YESG. WD repeat units follow at residues 2491 to 2527 and 2533 to 2574; these read GIIK…LVWD and RMVQ…TTYS.

It belongs to the protein kinase superfamily. TKL Ser/Thr protein kinase family. ROCO subfamily.

The catalysed reaction is L-seryl-[protein] + ATP = O-phospho-L-seryl-[protein] + ADP + H(+). It carries out the reaction L-threonyl-[protein] + ATP = O-phospho-L-threonyl-[protein] + ADP + H(+). This chain is Probable serine/threonine-protein kinase roco7 (roco7), found in Dictyostelium discoideum (Social amoeba).